Reading from the N-terminus, the 275-residue chain is U6 snRNA phosphodiesterase 1 (275 aa).

A disordered region spans residues 1–25 (MEFLKHYEDDEDQDDENNTKDENVN). The Proton acceptor role is filled by His122. Residues 122–124 (HIS), Tyr206, and 208–214 (NPEPHLS) each bind AMP. UMP-binding positions include Tyr206 and 210-214 (EPHLS). The Proton donor role is filled by His212.

This sequence belongs to the 2H phosphoesterase superfamily. USB1 family.

It localises to the nucleus. It catalyses the reaction a 3'-end uridylyl-uridine-RNA = a 3'-end 2',3'-cyclophospho-uridine-RNA + uridine. 3'-5' RNA exonuclease that trims the 3' end of oligo(U) tracts of the pre-U6 small nuclear RNA (snRNA) molecule, leading to the formation of a mature U6 snRNA 3' end-terminated with a 2',3'-cyclic phosphate. Participates in the U6 snRNA 3' end processing that prevents U6 snRNA degradation. The protein is U6 snRNA phosphodiesterase 1 of Dictyostelium discoideum (Social amoeba).